Reading from the N-terminus, the 313-residue chain is Acetyl-coenzyme A carboxylase carboxyl transferase subunit beta (313 aa).

The CoA carboxyltransferase N-terminal domain occupies 24-293 (LWIKCPDSGQ…LETASKSVQP (270 aa)).

This sequence belongs to the AccD/PCCB family. Acetyl-CoA carboxylase is a heterohexamer composed of biotin carboxyl carrier protein (AccB), biotin carboxylase (AccC) and two subunits each of ACCase subunit alpha (AccA) and ACCase subunit beta (AccD).

The protein localises to the cytoplasm. The enzyme catalyses N(6)-carboxybiotinyl-L-lysyl-[protein] + acetyl-CoA = N(6)-biotinyl-L-lysyl-[protein] + malonyl-CoA. The protein operates within lipid metabolism; malonyl-CoA biosynthesis; malonyl-CoA from acetyl-CoA: step 1/1. Component of the acetyl coenzyme A carboxylase (ACC) complex. Biotin carboxylase (BC) catalyzes the carboxylation of biotin on its carrier protein (BCCP) and then the CO(2) group is transferred by the transcarboxylase to acetyl-CoA to form malonyl-CoA. In Bradyrhizobium diazoefficiens (strain JCM 10833 / BCRC 13528 / IAM 13628 / NBRC 14792 / USDA 110), this protein is Acetyl-coenzyme A carboxylase carboxyl transferase subunit beta.